The chain runs to 382 residues: Mannitol-1-phosphate 5-dehydrogenase (382 aa).

Residue 3-14 participates in NAD(+) binding; sequence ALHFGAGNIGRG.

The protein belongs to the mannitol dehydrogenase family.

The enzyme catalyses D-mannitol 1-phosphate + NAD(+) = beta-D-fructose 6-phosphate + NADH + H(+). The sequence is that of Mannitol-1-phosphate 5-dehydrogenase from Salmonella enteritidis PT4 (strain P125109).